The primary structure comprises 555 residues: La-related protein 7 (555 aa).

Residues 36–127 form the HTH La-type RNA-binding domain; the sequence is RSRVKQLLSD…RRKEPLGETP (92 aa). The region spanning 133 to 211 is the RRM domain; it reads RTVYVELLPK…PRKPGIFPKT (79 aa). A disordered region spans residues 218-327; the sequence is PFDAVTQDND…ENKDEELNSL (110 aa). Composition is skewed to polar residues over residues 238–251, 258–274, and 284–293; these read KNST…NNMD, STVT…STVS, and SQSFEASSGE. A coiled-coil region spans residues 295–356; sequence QFEMSSKMRK…ERLKVGEEVI (62 aa). The segment covering 303 to 327 has biased composition (basic and acidic residues); it reads RKVEEEKSELKDLSSENKDEELNSL. A xRRM domain is found at 425-538; it reads EFLSGVIVKI…TEKLISKAEK (114 aa).

The protein belongs to the LARP7 family. Core component of the 7SK RNP complex. Associates with box C/D small nucleolar ribonucleoprotein (snoRNP) complexes.

The protein resides in the nucleus. It localises to the nucleoplasm. Functionally, RNA-binding protein that specifically binds distinct small nuclear RNA (snRNAs) and regulates their processing and function. Specifically binds the 7SK snRNA (7SK RNA) and acts as a core component of the 7SK ribonucleoprotein (RNP) complex, thereby acting as a negative regulator of transcription elongation by RNA polymerase II. The 7SK RNP complex sequesters the positive transcription elongation factor b (P-TEFb) in a large inactive 7SK RNP complex preventing RNA polymerase II phosphorylation and subsequent transcriptional elongation. The 7SK RNP complex also promotes snRNA gene transcription by RNA polymerase II via interaction with the little elongation complex (LEC). LARP7 specifically binds to the highly conserved 3'-terminal U-rich stretch of 7SK RNA; on stimulation, remains associated with 7SK RNA, whereas P-TEFb is released from the complex. LARP7 also acts as a regulator of mRNA splicing fidelity by promoting U6 snRNA processing. Specifically binds U6 snRNAs and associates with a subset of box C/D RNP complexes: promotes U6 snRNA 2'-O-methylation by facilitating U6 snRNA loading into box C/D RNP complexes. U6 snRNA 2'-O-methylation is required for mRNA splicing fidelity. This is La-related protein 7 from Danio rerio (Zebrafish).